The following is a 205-amino-acid chain: Large ribosomal subunit protein uL3c (205 aa).

Residues 129–154 (SRGPMSHGSKNHRQPGSIGAGTTPGR) are disordered.

The protein belongs to the universal ribosomal protein uL3 family. Part of the 50S ribosomal subunit.

It is found in the plastid. The protein resides in the chloroplast. One of the primary rRNA binding proteins, it binds directly near the 3'-end of the 23S rRNA, where it nucleates assembly of the 50S subunit. The protein is Large ribosomal subunit protein uL3c (rpl3) of Pyropia yezoensis (Susabi-nori).